The following is a 1224-amino-acid chain: DNA-directed RNA polymerase subunit beta' (1224 aa).

Zn(2+) is bound by residues Cys-60, Cys-62, Cys-75, and Cys-78. The Mg(2+) site is built by Asp-449, Asp-451, and Asp-453. Residues Cys-819, Cys-893, Cys-900, and Cys-903 each coordinate Zn(2+).

It belongs to the RNA polymerase beta' chain family. As to quaternary structure, the RNAP catalytic core consists of 2 alpha, 1 beta, 1 beta' and 1 omega subunit. When a sigma factor is associated with the core the holoenzyme is formed, which can initiate transcription. It depends on Mg(2+) as a cofactor. The cofactor is Zn(2+).

It carries out the reaction RNA(n) + a ribonucleoside 5'-triphosphate = RNA(n+1) + diphosphate. Its function is as follows. DNA-dependent RNA polymerase catalyzes the transcription of DNA into RNA using the four ribonucleoside triphosphates as substrates. In Lactobacillus johnsonii (strain CNCM I-12250 / La1 / NCC 533), this protein is DNA-directed RNA polymerase subunit beta'.